The sequence spans 632 residues: Biosynthetic arginine decarboxylase (632 aa).

Position 101 is an N6-(pyridoxal phosphate)lysine (K101). 281 to 291 provides a ligand contact to substrate; that stretch reads FDVGGGLGVDY.

It belongs to the Orn/Lys/Arg decarboxylase class-II family. SpeA subfamily. Mg(2+) is required as a cofactor. The cofactor is pyridoxal 5'-phosphate.

The enzyme catalyses L-arginine + H(+) = agmatine + CO2. Its pathway is amine and polyamine biosynthesis; agmatine biosynthesis; agmatine from L-arginine: step 1/1. Its function is as follows. Catalyzes the biosynthesis of agmatine from arginine. The polypeptide is Biosynthetic arginine decarboxylase (Escherichia coli O157:H7 (strain EC4115 / EHEC)).